The sequence spans 186 residues: Elongation factor P (186 aa).

Belongs to the elongation factor P family.

It localises to the cytoplasm. It functions in the pathway protein biosynthesis; polypeptide chain elongation. Its function is as follows. Involved in peptide bond synthesis. Stimulates efficient translation and peptide-bond synthesis on native or reconstituted 70S ribosomes in vitro. Probably functions indirectly by altering the affinity of the ribosome for aminoacyl-tRNA, thus increasing their reactivity as acceptors for peptidyl transferase. This is Elongation factor P from Brucella canis (strain ATCC 23365 / NCTC 10854 / RM-666).